The following is a 529-amino-acid chain: Glycylpeptide N-tetradecanoyltransferase (529 aa).

Polar residues predominate over residues 1 to 10 (MSEQEGNQSE). A disordered region spans residues 1–65 (MSEQEGNQSE…ANPATKLTPS (65 aa)). A compositionally biased stretch (basic and acidic residues) spans 11–23 (HQSEHVGESEGKL). Residues 26–40 (ETPTTSQSTNASTGT) are compositionally biased toward polar residues. Residues 118–121 (FKFW), 252–254 (LCV), and 260–264 (SKRLT) each bind tetradecanoyl-CoA. Valine 529 serves as the catalytic Proton acceptor; via carboxylate.

The protein belongs to the NMT family. Monomer.

It is found in the cytoplasm. It catalyses the reaction N-terminal glycyl-[protein] + tetradecanoyl-CoA = N-tetradecanoylglycyl-[protein] + CoA + H(+). In terms of biological role, adds a myristoyl group to the N-terminal glycine residue of certain cellular proteins. In Ajellomyces capsulatus (Darling's disease fungus), this protein is Glycylpeptide N-tetradecanoyltransferase.